The chain runs to 667 residues: DNA ligase (667 aa).

Residues 32–36 and 80–81 each bind NAD(+); these read DKDYD and SL. The active-site N6-AMP-lysine intermediate is the lysine 121. Residues arginine 143, glutamate 178, and lysine 314 each coordinate NAD(+). The Zn(2+) site is built by cysteine 407, cysteine 410, cysteine 423, and cysteine 429. Residues 587-667 enclose the BRCT domain; the sequence is IVESIFKDKT…EFEKMLGRES (81 aa).

This sequence belongs to the NAD-dependent DNA ligase family. LigA subfamily. It depends on Mg(2+) as a cofactor. Requires Mn(2+) as cofactor.

It carries out the reaction NAD(+) + (deoxyribonucleotide)n-3'-hydroxyl + 5'-phospho-(deoxyribonucleotide)m = (deoxyribonucleotide)n+m + AMP + beta-nicotinamide D-nucleotide.. Its function is as follows. DNA ligase that catalyzes the formation of phosphodiester linkages between 5'-phosphoryl and 3'-hydroxyl groups in double-stranded DNA using NAD as a coenzyme and as the energy source for the reaction. It is essential for DNA replication and repair of damaged DNA. The chain is DNA ligase from Clostridium botulinum (strain Alaska E43 / Type E3).